Consider the following 82-residue polypeptide: MGGISVWQLLIIAVIVVLLFGTKKLRGIGGDLGGAVKGFKKAMSEDEPAKKDDKDADFEPKSLEEQQKKEAAPESKKDKEQA.

Residues 1-21 (MGGISVWQLLIIAVIVVLLFG) traverse the membrane as a helical segment. A disordered region spans residues 41–82 (KAMSEDEPAKKDDKDADFEPKSLEEQQKKEAAPESKKDKEQA). Positions 42 to 82 (AMSEDEPAKKDDKDADFEPKSLEEQQKKEAAPESKKDKEQA) are enriched in basic and acidic residues.

The protein belongs to the TatA/E family. In terms of assembly, the Tat system comprises two distinct complexes: a TatABC complex, containing multiple copies of TatA, TatB and TatC subunits, and a separate TatA complex, containing only TatA subunits. Substrates initially bind to the TatABC complex, which probably triggers association of the separate TatA complex to form the active translocon.

Its subcellular location is the cell inner membrane. Part of the twin-arginine translocation (Tat) system that transports large folded proteins containing a characteristic twin-arginine motif in their signal peptide across membranes. TatA could form the protein-conducting channel of the Tat system. The sequence is that of Sec-independent protein translocase protein TatA from Vibrio campbellii (strain ATCC BAA-1116).